Consider the following 145-residue polypeptide: Ribosomal RNA large subunit methyltransferase H (145 aa).

S-adenosyl-L-methionine contacts are provided by residues Leu-64, Gly-93, and 112-117 (LSALTF).

Belongs to the RNA methyltransferase RlmH family. As to quaternary structure, homodimer.

Its subcellular location is the cytoplasm. It carries out the reaction pseudouridine(1915) in 23S rRNA + S-adenosyl-L-methionine = N(3)-methylpseudouridine(1915) in 23S rRNA + S-adenosyl-L-homocysteine + H(+). Functionally, specifically methylates the pseudouridine at position 1915 (m3Psi1915) in 23S rRNA. This is Ribosomal RNA large subunit methyltransferase H from Prochlorococcus marinus (strain SARG / CCMP1375 / SS120).